Reading from the N-terminus, the 609-residue chain is Arginine--tRNA ligase (609 aa).

The 'HIGH' region signature appears at 132–142 (ANPTSSLHVGH).

This sequence belongs to the class-I aminoacyl-tRNA synthetase family. In terms of assembly, monomer.

It is found in the cytoplasm. The enzyme catalyses tRNA(Arg) + L-arginine + ATP = L-arginyl-tRNA(Arg) + AMP + diphosphate. This chain is Arginine--tRNA ligase, found in Psychrobacter sp. (strain PRwf-1).